The sequence spans 963 residues: Iron-responsive element-binding protein 2 (963 aa).

3 residues coordinate [4Fe-4S] cluster: C512, C578, and C581.

The protein belongs to the aconitase/IPM isomerase family. Interacts with RBCK1 only in iron-rich conditions. Interacts (when associated with the 4Fe-4S) with FBXL5. Interacts with CIAO1 and CIAO2A. It depends on [4Fe-4S] cluster as a cofactor. Post-translationally, ubiquitinated and degraded by the proteasome in presence of high level of iron and oxygen. Ubiquitinated by a SCF complex containing FBXL5. Upon iron and oxygen depletion FBXL5 is degraded, preventing ubiquitination and allowing its RNA-binding activity.

The protein resides in the cytoplasm. Functionally, RNA-binding protein that binds to iron-responsive elements (IRES), which are stem-loop structures found in the 5'-UTR of ferritin, and delta aminolevulinic acid synthase mRNAs, and in the 3'-UTR of transferrin receptor mRNA. Binding to the IRE element in ferritin results in the repression of its mRNA translation. Binding of the protein to the transferrin receptor mRNA inhibits the degradation of this otherwise rapidly degraded mRNA. The protein is Iron-responsive element-binding protein 2 (Ireb2) of Mus musculus (Mouse).